Consider the following 270-residue polypeptide: Neurotrophic factor BDNF precursor form (270 aa).

The N-terminal stretch at 1–18 is a signal peptide; the sequence is MTILFVTMVISYFSCMRA. Residues 19–151 constitute a propeptide that is removed on maturation; sequence APMREIPGVQ…AANMSMRVRR (133 aa). An N-linked (GlcNAc...) asparagine glycan is attached at Asn-144. Disulfide bonds link Cys-164–Cys-231, Cys-209–Cys-260, and Cys-219–Cys-262.

Belongs to the NGF-beta family.

It is found in the secreted. Its function is as follows. Promotes the survival of neuronal populations that are all located either in the central nervous system or directly connected to it. In Cyprinus carpio (Common carp), this protein is Neurotrophic factor BDNF precursor form (bdnf).